The following is a 249-amino-acid chain: uncharacterized protein (249 aa).

It belongs to the ycf73 family.

It localises to the plastid. It is found in the chloroplast. This is an uncharacterized protein from Oryza sativa (Rice).